Consider the following 173-residue polypeptide: Lipoprotein signal peptidase (173 aa).

Transmembrane regions (helical) follow at residues 24–44 (PWLG…IAIL), 55–75 (ITGF…SFLA), 80–100 (WQRW…VWLL), and 105–125 (GQKL…GNVI). Catalysis depends on residues aspartate 135 and aspartate 153. The chain crosses the membrane as a helical span at residues 145–165 (HWPAFNVADCGICIGAVLLII).

The protein belongs to the peptidase A8 family.

It is found in the cell inner membrane. The enzyme catalyses Release of signal peptides from bacterial membrane prolipoproteins. Hydrolyzes -Xaa-Yaa-Zaa-|-(S,diacylglyceryl)Cys-, in which Xaa is hydrophobic (preferably Leu), and Yaa (Ala or Ser) and Zaa (Gly or Ala) have small, neutral side chains.. It functions in the pathway protein modification; lipoprotein biosynthesis (signal peptide cleavage). This protein specifically catalyzes the removal of signal peptides from prolipoproteins. The sequence is that of Lipoprotein signal peptidase from Ralstonia nicotianae (strain ATCC BAA-1114 / GMI1000) (Ralstonia solanacearum).